Consider the following 308-residue polypeptide: MKVIFAGTPDFAAAALKAVAAAGFEIPLVLTQPDRPKGRGMQLTAPPVKQAALELGLRVEQPEKLRNNAEALQMLKEVEADVMVVAAYGLILPQEVLDTPKHGCLNIHASLLPRWRGAAPIQRAIEAGDAETGVCIMQMDIGLDTGDVVSEHRYAIQPTDTANEVHDALMEIGAAAVVADLQQLQSKGRLNAVKQPEEGVTYAQKLSKEEARIDWSKSAAVIERKIRAFNPVPAAWVEYQGKPMKIRRAEVVAQQGAAGEVLSCSADGLVVACGENALKITELQPAGGRRMNIAAFAAGRHIEAGTKL.

110–113 is a binding site for (6S)-5,6,7,8-tetrahydrofolate; sequence SLLP.

It belongs to the Fmt family.

The catalysed reaction is L-methionyl-tRNA(fMet) + (6R)-10-formyltetrahydrofolate = N-formyl-L-methionyl-tRNA(fMet) + (6S)-5,6,7,8-tetrahydrofolate + H(+). Functionally, attaches a formyl group to the free amino group of methionyl-tRNA(fMet). The formyl group appears to play a dual role in the initiator identity of N-formylmethionyl-tRNA by promoting its recognition by IF2 and preventing the misappropriation of this tRNA by the elongation apparatus. The chain is Methionyl-tRNA formyltransferase from Neisseria meningitidis serogroup A / serotype 4A (strain DSM 15465 / Z2491).